Reading from the N-terminus, the 639-residue chain is Chaperone protein DnaK (639 aa).

The residue at position 198 (Thr198) is a Phosphothreonine; by autocatalysis. Residues 602–639 (QAKSQAQGGDNADAGKQANATADDVVDAEFEEVKDDKK) form a disordered region. Residues 625-639 (DVVDAEFEEVKDDKK) show a composition bias toward acidic residues.

It belongs to the heat shock protein 70 family.

Acts as a chaperone. This is Chaperone protein DnaK from Shewanella baltica (strain OS195).